A 307-amino-acid polypeptide reads, in one-letter code: Transaldolase (307 aa).

Residue lysine 125 is the Schiff-base intermediate with substrate of the active site.

This sequence belongs to the transaldolase family. Type 1 subfamily. Homodimer.

It localises to the cytoplasm. The catalysed reaction is D-sedoheptulose 7-phosphate + D-glyceraldehyde 3-phosphate = D-erythrose 4-phosphate + beta-D-fructose 6-phosphate. It participates in carbohydrate degradation; pentose phosphate pathway; D-glyceraldehyde 3-phosphate and beta-D-fructose 6-phosphate from D-ribose 5-phosphate and D-xylulose 5-phosphate (non-oxidative stage): step 2/3. In terms of biological role, transaldolase is important for the balance of metabolites in the pentose-phosphate pathway. The polypeptide is Transaldolase (Pseudomonas paraeruginosa (strain DSM 24068 / PA7) (Pseudomonas aeruginosa (strain PA7))).